The primary structure comprises 141 residues: Hemoglobin subunit alpha (141 aa).

The region spanning 1–141 is the Globin domain; sequence VLSADDKANV…VSTVLTSKYR (141 aa). Position 3 is a phosphoserine (Ser3). Residues Lys7 and Lys11 each carry the N6-succinyllysine modification. An N6-acetyllysine; alternate modification is found at Lys16. Lys16 is modified (N6-succinyllysine; alternate). The residue at position 24 (Tyr24) is a Phosphotyrosine. Ser35 is modified (phosphoserine). Lys40 bears the N6-succinyllysine mark. Ser49 bears the Phosphoserine mark. His58 contacts O2. Position 87 (His87) interacts with heme b. At Ser102 the chain carries Phosphoserine. The residue at position 108 (Thr108) is a Phosphothreonine. A phosphoserine mark is found at Ser124 and Ser131. A phosphothreonine mark is found at Thr134 and Thr137. Ser138 is subject to Phosphoserine.

The protein belongs to the globin family. As to quaternary structure, heterotetramer of two alpha chains and two beta chains. As to expression, red blood cells.

Its function is as follows. Involved in oxygen transport from the lung to the various peripheral tissues. The sequence is that of Hemoglobin subunit alpha from Peromyscus californicus (California mouse).